Reading from the N-terminus, the 129-residue chain is Small ribosomal subunit protein uS11 (129 aa).

Belongs to the universal ribosomal protein uS11 family. As to quaternary structure, part of the 30S ribosomal subunit. Interacts with proteins S7 and S18. Binds to IF-3.

Functionally, located on the platform of the 30S subunit, it bridges several disparate RNA helices of the 16S rRNA. Forms part of the Shine-Dalgarno cleft in the 70S ribosome. The polypeptide is Small ribosomal subunit protein uS11 (Azorhizobium caulinodans (strain ATCC 43989 / DSM 5975 / JCM 20966 / LMG 6465 / NBRC 14845 / NCIMB 13405 / ORS 571)).